A 252-amino-acid polypeptide reads, in one-letter code: N-acetylglucosaminyl-phosphatidylinositol de-N-acetylase (252 aa).

The chain crosses the membrane as a helical span at residues 2–22 (EVVGLLCVAVAVLTWGFLRVW). At 23 to 252 (NSAERMRSPE…YMSVNSLQLL (230 aa)) the chain is on the cytoplasmic side.

The protein belongs to the PIGL family.

It is found in the endoplasmic reticulum membrane. It carries out the reaction a 6-(N-acetyl-alpha-D-glucosaminyl)-1-(1,2-diacyl-sn-glycero-3-phospho)-1D-myo-inositol + H2O = a 6-(alpha-D-glucosaminyl)-1-(1,2-diacyl-sn-glycero-3-phospho)-1D-myo-inositol + acetate. It participates in glycolipid biosynthesis; glycosylphosphatidylinositol-anchor biosynthesis. Catalyzes the second step of glycosylphosphatidylinositol (GPI) biosynthesis, which is the de-N-acetylation of N-acetylglucosaminyl-phosphatidylinositol. The protein is N-acetylglucosaminyl-phosphatidylinositol de-N-acetylase (Pigl) of Rattus norvegicus (Rat).